The following is a 361-amino-acid chain: Chorismate synthase (361 aa).

Arg-48 provides a ligand contact to NADP(+). Residues 126–128, Gly-269, 302–306, and Asn-328 each bind FMN; these read RSS and KPVPS.

Belongs to the chorismate synthase family. In terms of assembly, homotetramer. FMNH2 serves as cofactor.

The catalysed reaction is 5-O-(1-carboxyvinyl)-3-phosphoshikimate = chorismate + phosphate. It participates in metabolic intermediate biosynthesis; chorismate biosynthesis; chorismate from D-erythrose 4-phosphate and phosphoenolpyruvate: step 7/7. Catalyzes the anti-1,4-elimination of the C-3 phosphate and the C-6 proR hydrogen from 5-enolpyruvylshikimate-3-phosphate (EPSP) to yield chorismate, which is the branch point compound that serves as the starting substrate for the three terminal pathways of aromatic amino acid biosynthesis. This reaction introduces a second double bond into the aromatic ring system. The sequence is that of Chorismate synthase from Treponema denticola (strain ATCC 35405 / DSM 14222 / CIP 103919 / JCM 8153 / KCTC 15104).